The following is a 450-amino-acid chain: Probable galactarate/D-glucarate transporter GudP (450 aa).

Topologically, residues 1-20 (MSSLSQAASSVEKRTNARYW) are cytoplasmic. Residues 21–41 (IVVMLFIVTSFNYGDRATLSI) traverse the membrane as a helical segment. Residues 42-58 (AGSEMAKDIGLDPVGMG) are Periplasmic-facing. Residues 59-79 (YVFSAFSWAYVIGQIPGGWLL) traverse the membrane as a helical segment. The Cytoplasmic portion of the chain corresponds to 80-85 (DRFGSK). The helical transmembrane segment at 86-105 (RVYFWSIFIWSMFTLLQGFV) threads the bilayer. Residues 106–109 (DIFS) are Periplasmic-facing. The chain crosses the membrane as a helical span at residues 110–132 (GFGIIVALFTLRFLVGLAEAPSF). At 133 to 153 (PGNSRIVAAWFPAQERGTAVS) the chain is on the cytoplasmic side. The chain crosses the membrane as a helical span at residues 154–174 (IFNSAQYFATVIFAPIMGWLT). The Periplasmic segment spans residues 175 to 176 (HE). The helical transmembrane segment at 177–197 (VGWSHVFFFMGGLGIVISFIW) threads the bilayer. At 198 to 254 (LKVIHEPNQHPGVNKKELEYIAAGGALINMDQQNTKVKVPFSVKWGQIKQLLGSRMM) the chain is on the cytoplasmic side. Residues 255-275 (IGVYIGQYCINALTYFFITWF) traverse the membrane as a helical segment. At 276–290 (PVYLVQARGMSILKA) the chain is on the periplasmic side. The chain crosses the membrane as a helical span at residues 291–311 (GFVASVPAVCGFIGGVLGGII). Over 312–329 (SDWLMRRTGSLNIARKTP) the chain is Cytoplasmic. Residues 330–350 (IVMGMLLSMVMVFCNYVNVEW) traverse the membrane as a helical segment. Position 351 (Met351) is a topological domain, periplasmic. The helical transmembrane segment at 352 to 372 (IIGFMALAFFGKGIGALGWAV) threads the bilayer. Over 373 to 387 (MADTAPKEISGLSGG) the chain is Cytoplasmic. The helical transmembrane segment at 388–408 (LFNMFGNISGIVTPIAIGYIV) threads the bilayer. The Periplasmic portion of the chain corresponds to 409-415 (GTTGSFN). A helical membrane pass occupies residues 416–436 (GALIYVGVHALIAVLSYLVLV). Residues 437–450 (GDIKRIELKPVAGQ) lie on the Cytoplasmic side of the membrane.

Belongs to the major facilitator superfamily. Phthalate permease family.

It is found in the cell inner membrane. It catalyses the reaction galactarate(in) + H(+)(in) = galactarate(out) + H(+)(out). It carries out the reaction D-glucarate(in) + H(+)(in) = D-glucarate(out) + H(+)(out). The enzyme catalyses (R)-glycerate(in) + H(+)(in) = (R)-glycerate(out) + H(+)(out). In terms of biological role, probably involved in the uptake of galactarate and/or D-glucarate. May also transport D-glycerate. In Escherichia coli (strain K12), this protein is Probable galactarate/D-glucarate transporter GudP.